Here is a 55-residue protein sequence, read N- to C-terminus: Large ribosomal subunit protein bL33 (55 aa).

This sequence belongs to the bacterial ribosomal protein bL33 family.

This chain is Large ribosomal subunit protein bL33, found in Baumannia cicadellinicola subsp. Homalodisca coagulata.